Here is a 398-residue protein sequence, read N- to C-terminus: Carbamoyl phosphate synthase small chain (398 aa).

CPSase regions lie at residues 1–205 and 1–207; these read MTQT…TNDA and MTQT…DACN. 3 residues coordinate L-glutamine: Ser60, Gly257, and Gly259. Positions 209–397 constitute a Glutamine amidotransferase type-1 domain; sequence HIVAIDYGIK…FNLIMDYKRT (189 aa). Catalysis depends on Cys286, which acts as the Nucleophile. Leu287, Gln290, Asn328, Gly330, and Phe331 together coordinate L-glutamine. Active-site residues include His370 and Glu372.

The protein belongs to the CarA family. In terms of assembly, composed of two chains; the small (or glutamine) chain promotes the hydrolysis of glutamine to ammonia, which is used by the large (or ammonia) chain to synthesize carbamoyl phosphate. Tetramer of heterodimers (alpha,beta)4.

It catalyses the reaction hydrogencarbonate + L-glutamine + 2 ATP + H2O = carbamoyl phosphate + L-glutamate + 2 ADP + phosphate + 2 H(+). The catalysed reaction is L-glutamine + H2O = L-glutamate + NH4(+). It participates in amino-acid biosynthesis; L-arginine biosynthesis; carbamoyl phosphate from bicarbonate: step 1/1. It functions in the pathway pyrimidine metabolism; UMP biosynthesis via de novo pathway; (S)-dihydroorotate from bicarbonate: step 1/3. Functionally, small subunit of the glutamine-dependent carbamoyl phosphate synthetase (CPSase). CPSase catalyzes the formation of carbamoyl phosphate from the ammonia moiety of glutamine, carbonate, and phosphate donated by ATP, constituting the first step of 2 biosynthetic pathways, one leading to arginine and/or urea and the other to pyrimidine nucleotides. The small subunit (glutamine amidotransferase) binds and cleaves glutamine to supply the large subunit with the substrate ammonia. In Bartonella quintana (strain Toulouse) (Rochalimaea quintana), this protein is Carbamoyl phosphate synthase small chain.